The chain runs to 302 residues: Arginase (302 aa).

Residues His-103, Asp-126, His-128, and Asp-130 each coordinate Mn(2+). Substrate is bound by residues 128–132 (HGDLN), 139–141 (SGN), and Asp-180. 2 residues coordinate Mn(2+): Asp-229 and Asp-231. Residues Thr-243 and Glu-274 each coordinate substrate.

The protein belongs to the arginase family. It depends on Mn(2+) as a cofactor.

It carries out the reaction L-arginine + H2O = urea + L-ornithine. The protein operates within nitrogen metabolism; urea cycle; L-ornithine and urea from L-arginine: step 1/1. The protein is Arginase (arg) of Staphylococcus aureus (strain MSSA476).